A 235-amino-acid chain; its full sequence is Lipoprotein-releasing system ATP-binding protein LolD (235 aa).

Residues 5 to 235 (FALANIYKSF…SIDESGFNKI (231 aa)) form the ABC transporter domain. ATP is bound at residue 40–47 (GKSGSGKS).

This sequence belongs to the ABC transporter superfamily. Lipoprotein translocase (TC 3.A.1.125) family. As to quaternary structure, the complex is composed of two ATP-binding proteins (LolD) and two transmembrane proteins (LolC and LolE).

It is found in the cell inner membrane. Its function is as follows. Part of the ABC transporter complex LolCDE involved in the translocation of mature outer membrane-directed lipoproteins, from the inner membrane to the periplasmic chaperone, LolA. Responsible for the formation of the LolA-lipoprotein complex in an ATP-dependent manner. This chain is Lipoprotein-releasing system ATP-binding protein LolD, found in Ehrlichia chaffeensis (strain ATCC CRL-10679 / Arkansas).